A 402-amino-acid polypeptide reads, in one-letter code: Tryptophan synthase beta chain (402 aa).

Lys91 bears the N6-(pyridoxal phosphate)lysine mark.

It belongs to the TrpB family. As to quaternary structure, tetramer of two alpha and two beta chains. Pyridoxal 5'-phosphate serves as cofactor.

It catalyses the reaction (1S,2R)-1-C-(indol-3-yl)glycerol 3-phosphate + L-serine = D-glyceraldehyde 3-phosphate + L-tryptophan + H2O. It functions in the pathway amino-acid biosynthesis; L-tryptophan biosynthesis; L-tryptophan from chorismate: step 5/5. In terms of biological role, the beta subunit is responsible for the synthesis of L-tryptophan from indole and L-serine. The chain is Tryptophan synthase beta chain from Streptococcus thermophilus (strain ATCC BAA-250 / LMG 18311).